Reading from the N-terminus, the 204-residue chain is ATP-dependent Clp protease proteolytic subunit (204 aa).

The active-site Nucleophile is Ser100. Residue His125 is part of the active site.

It belongs to the peptidase S14 family. As to quaternary structure, fourteen ClpP subunits assemble into 2 heptameric rings which stack back to back to give a disk-like structure with a central cavity, resembling the structure of eukaryotic proteasomes.

Its subcellular location is the cytoplasm. The catalysed reaction is Hydrolysis of proteins to small peptides in the presence of ATP and magnesium. alpha-casein is the usual test substrate. In the absence of ATP, only oligopeptides shorter than five residues are hydrolyzed (such as succinyl-Leu-Tyr-|-NHMec, and Leu-Tyr-Leu-|-Tyr-Trp, in which cleavage of the -Tyr-|-Leu- and -Tyr-|-Trp bonds also occurs).. Cleaves peptides in various proteins in a process that requires ATP hydrolysis. Has a chymotrypsin-like activity. Plays a major role in the degradation of misfolded proteins. The polypeptide is ATP-dependent Clp protease proteolytic subunit (Anaeromyxobacter sp. (strain Fw109-5)).